Here is a 559-residue protein sequence, read N- to C-terminus: Pentatricopeptide repeat-containing protein At4g38010 (559 aa).

12 PPR repeats span residues 70 to 104, 105 to 139, 140 to 170, 171 to 201, 203 to 233, 238 to 268, 269 to 304, 305 to 339, 340 to 370, 371 to 405, 406 to 440, and 443 to 473; these read SSFS…GFSP, DMFT…GFYD, DIYV…MPVR, DVVS…MDVE, NLAT…ILKR, SLET…LEKK, DKVS…GIKP, DGHI…GIKW, DTHI…IRSK, NVFT…GFKP, NLVT…EYNL, and KLEH…MPVK. The type E motif stretch occupies residues 478–554; that stretch reads ICGAILSACK…VPGSSYIEKF (77 aa).

The protein belongs to the PPR family. PCMP-E subfamily.

This Arabidopsis thaliana (Mouse-ear cress) protein is Pentatricopeptide repeat-containing protein At4g38010 (PCMP-E45).